A 116-amino-acid polypeptide reads, in one-letter code: Host transcription reprogramming factor 4 (116 aa).

Residues 1–24 (MHIIHISKFMALLAISTIAIPTRG) form the signal peptide. The disordered stretch occupies residues 24–53 (GRSEVDSRDVNQAQTVTSGSSIAPSGSEKR). The span at 33-47 (VNQAQTVTSGSSIAP) shows a compositional bias: polar residues. A C2H2-type; degenerate zinc finger spans residues 74–96 (FQCPHCKDGISNRVALYTHVKAF).

The protein localises to the secreted. It localises to the host nucleus. Functionally, probable secreted effector that translocates into the nuclei of host cells to reprogram the expression of targeted genes by binding on effector binding elements in rice. The polypeptide is Host transcription reprogramming factor 4 (Pyricularia oryzae (strain 70-15 / ATCC MYA-4617 / FGSC 8958) (Rice blast fungus)).